The chain runs to 28 residues: Conotoxin as14b (28 aa).

Intrachain disulfides connect Cys-7-Cys-27 and Cys-11-Cys-23.

Belongs to the conotoxin L superfamily. Expressed by the venom duct.

The protein localises to the secreted. In vivo, intracranial injection elicits scratching and grooming activity in mice, and causes body and rear limb extension and tail curling immediately upon injection. In Conus cancellatus (Cancellate cone), this protein is Conotoxin as14b.